Reading from the N-terminus, the 400-residue chain is 8-amino-7-oxononanoate synthase (400 aa).

A substrate-binding site is contributed by arginine 21. 112–113 (GY) lines the pyridoxal 5'-phosphate pocket. Histidine 137 contacts substrate. Serine 183, histidine 211, and threonine 239 together coordinate pyridoxal 5'-phosphate. Lysine 242 carries the post-translational modification N6-(pyridoxal phosphate)lysine. Residue threonine 358 participates in substrate binding.

The protein belongs to the class-II pyridoxal-phosphate-dependent aminotransferase family. BioF subfamily. In terms of assembly, homodimer. It depends on pyridoxal 5'-phosphate as a cofactor.

It carries out the reaction 6-carboxyhexanoyl-[ACP] + L-alanine + H(+) = (8S)-8-amino-7-oxononanoate + holo-[ACP] + CO2. It participates in cofactor biosynthesis; biotin biosynthesis. Catalyzes the decarboxylative condensation of pimeloyl-[acyl-carrier protein] and L-alanine to produce 8-amino-7-oxononanoate (AON), [acyl-carrier protein], and carbon dioxide. The polypeptide is 8-amino-7-oxononanoate synthase (Burkholderia lata (strain ATCC 17760 / DSM 23089 / LMG 22485 / NCIMB 9086 / R18194 / 383)).